We begin with the raw amino-acid sequence, 465 residues long: Protein dml1 (465 aa).

A Phosphoserine modification is found at serine 446.

This sequence belongs to the misato family.

The protein resides in the mitochondrion. Involved in the partitioning of the mitochondrial organelle and mitochondrial DNA (mtDNA) inheritance. The polypeptide is Protein dml1 (dml1) (Schizosaccharomyces pombe (strain 972 / ATCC 24843) (Fission yeast)).